We begin with the raw amino-acid sequence, 319 residues long: ATP-dependent 6-phosphofructokinase (319 aa).

ATP is bound at residue Gly-11. Residue 21–25 coordinates ADP; the sequence is RAVVR. Residues 72-73 and 102-105 each bind ATP; these read RC and GDGS. Asp-103 serves as a coordination point for Mg(2+). A substrate-binding site is contributed by 125 to 127; sequence TID. Residue Asp-127 is the Proton acceptor of the active site. Arg-154 contributes to the ADP binding site. Residues Arg-162 and 169–171 each bind substrate; that span reads MGR. ADP contacts are provided by residues 185 to 187, Lys-211, and 213 to 215; these read GAE and KMH. Residues Glu-222, Arg-243, and 249–252 each bind substrate; that span reads HIQR.

This sequence belongs to the phosphofructokinase type A (PFKA) family. ATP-dependent PFK group I subfamily. Prokaryotic clade 'B1' sub-subfamily. As to quaternary structure, homotetramer. The cofactor is Mg(2+).

The protein resides in the cytoplasm. It carries out the reaction beta-D-fructose 6-phosphate + ATP = beta-D-fructose 1,6-bisphosphate + ADP + H(+). Its pathway is carbohydrate degradation; glycolysis; D-glyceraldehyde 3-phosphate and glycerone phosphate from D-glucose: step 3/4. Its activity is regulated as follows. Allosterically activated by ADP and other diphosphonucleosides, and allosterically inhibited by phosphoenolpyruvate. In terms of biological role, catalyzes the phosphorylation of D-fructose 6-phosphate to fructose 1,6-bisphosphate by ATP, the first committing step of glycolysis. The chain is ATP-dependent 6-phosphofructokinase from Clostridium botulinum (strain 657 / Type Ba4).